The primary structure comprises 135 residues: Small ribosomal subunit protein bS16 (135 aa).

The protein belongs to the bacterial ribosomal protein bS16 family.

This is Small ribosomal subunit protein bS16 from Prosthecochloris aestuarii (strain DSM 271 / SK 413).